Reading from the N-terminus, the 176-residue chain is Lipoprotein signal peptidase (176 aa).

4 helical membrane passes run 10 to 30 (LFQFYPHNLIWLGLSVLAIVL), 48 to 68 (VPVLPFLNWTLLHNYGAAFSF), 78 to 98 (YFFTSLAGLVSILFVFWLLRM), and 102 to 122 (MVVLPVAIALILGGALGNLID). Active-site residues include Asp131 and Asp149. The chain crosses the membrane as a helical span at residues 141–161 (HFPAFNIADSAITLGTILLLI).

Belongs to the peptidase A8 family.

It is found in the cell inner membrane. It catalyses the reaction Release of signal peptides from bacterial membrane prolipoproteins. Hydrolyzes -Xaa-Yaa-Zaa-|-(S,diacylglyceryl)Cys-, in which Xaa is hydrophobic (preferably Leu), and Yaa (Ala or Ser) and Zaa (Gly or Ala) have small, neutral side chains.. The protein operates within protein modification; lipoprotein biosynthesis (signal peptide cleavage). Its function is as follows. This protein specifically catalyzes the removal of signal peptides from prolipoproteins. The chain is Lipoprotein signal peptidase from Acinetobacter baumannii (strain ATCC 17978 / DSM 105126 / CIP 53.77 / LMG 1025 / NCDC KC755 / 5377).